Consider the following 746-residue polypeptide: NAD(P)H-quinone oxidoreductase subunit 5, chloroplastic (746 aa).

16 helical membrane passes run 9–29 (WIIP…LLLF), 39–59 (IWTF…LYLS), 89–109 (IDPL…LVLI), 125–145 (FAYM…SNLI), 147–167 (VYFF…FWFT), 185–205 (GDFG…SFEF), 221–241 (VNFF…IAKS), 258–278 (TPIS…FLVA), 280–300 (LLPL…IGII), 327–347 (LGYM…FHLI), 354–374 (ALLF…VGYS), 396–416 (TAFL…CFWS), 425–445 (LLFS…TAFY), 547–567 (ILFP…IGIP), 608–628 (FSVS…KPFY), and 723–743 (YLFF…FFYF).

This sequence belongs to the complex I subunit 5 family. In terms of assembly, NDH is composed of at least 16 different subunits, 5 of which are encoded in the nucleus.

It localises to the plastid. It is found in the chloroplast thylakoid membrane. It catalyses the reaction a plastoquinone + NADH + (n+1) H(+)(in) = a plastoquinol + NAD(+) + n H(+)(out). The enzyme catalyses a plastoquinone + NADPH + (n+1) H(+)(in) = a plastoquinol + NADP(+) + n H(+)(out). Its function is as follows. NDH shuttles electrons from NAD(P)H:plastoquinone, via FMN and iron-sulfur (Fe-S) centers, to quinones in the photosynthetic chain and possibly in a chloroplast respiratory chain. The immediate electron acceptor for the enzyme in this species is believed to be plastoquinone. Couples the redox reaction to proton translocation, and thus conserves the redox energy in a proton gradient. In Capsella bursa-pastoris (Shepherd's purse), this protein is NAD(P)H-quinone oxidoreductase subunit 5, chloroplastic (ndhF).